The chain runs to 643 residues: Immediate-early phosphoprotein 57 (643 aa).

Disordered stretches follow at residues 1-180 (MAQK…GGCA) and 194-329 (TGWG…QCPP). Positions 24–52 (LDFSESEEEEEEEESSSESESDEDSDMEV) are enriched in acidic residues. Low complexity-rich tracts occupy residues 57 to 71 (QEAG…QPQQ) and 83 to 100 (QQPQ…QQQR). Residues 103–113 (KRGEESGDARP) show a composition bias toward basic and acidic residues. The segment covering 162 to 171 (QQPQSQAAQP) has biased composition (low complexity). The segment covering 215-241 (RRGDEDRRSGRDRRRREGRERDRESRS) has biased composition (basic and acidic residues). The segment covering 284 to 297 (AGPSQAQAAQAARA) has biased composition (low complexity). Basic and acidic residues predominate over residues 298-307 (PRQEQGERRQ). Residues 320–329 (QQCPPQQCPP) show a composition bias toward pro residues.

Belongs to the herpesviridae UL69 family.

The protein is Immediate-early phosphoprotein 57 (57) of Equus caballus (Horse).